The sequence spans 455 residues: Bleomycin hydrolase (455 aa).

Methionine 1 carries the N-acetylmethionine modification. Residues cysteine 73 and histidine 372 contribute to the active site. The residue at position 391 (lysine 391) is an N6-acetyllysine. Asparagine 396 is an active-site residue.

This sequence belongs to the peptidase C1 family. Homohexamer. Interacts with NUDT12 (via ANK repeats).

The protein resides in the cytoplasm. It is found in the cytoplasmic granule. It carries out the reaction Inactivates bleomycin B2 (a cytotoxic glycometallopeptide) by hydrolysis of a carboxyamide bond of beta-aminoalanine, but also shows general aminopeptidase activity. The specificity varies somewhat with source, but amino acid arylamides of Met, Leu and Ala are preferred.. In terms of biological role, the normal physiological role of BLM hydrolase is unknown, but it catalyzes the inactivation of the antitumor drug BLM (a glycopeptide) by hydrolyzing the carboxamide bond of its B-aminoalaninamide moiety thus protecting normal and malignant cells from BLM toxicity. The polypeptide is Bleomycin hydrolase (Blmh) (Mus musculus (Mouse)).